A 161-amino-acid chain; its full sequence is Ribonuclease H (161 aa).

The 140-residue stretch at 2-141 folds into the RNase H type-1 domain; the sequence is TNNEIIAATD…ADSLARQAAN (140 aa). Mg(2+) is bound by residues Asp11, Glu46, Asp69, and Asp133.

This sequence belongs to the RNase H family. As to quaternary structure, monomer. It depends on Mg(2+) as a cofactor.

The protein localises to the cytoplasm. It carries out the reaction Endonucleolytic cleavage to 5'-phosphomonoester.. Endonuclease that specifically degrades the RNA of RNA-DNA hybrids. The sequence is that of Ribonuclease H from Tropheryma whipplei (strain TW08/27) (Whipple's bacillus).